A 106-amino-acid chain; its full sequence is ATP-dependent Clp protease adapter protein ClpS (106 aa).

This sequence belongs to the ClpS family. As to quaternary structure, binds to the N-terminal domain of the chaperone ClpA.

Involved in the modulation of the specificity of the ClpAP-mediated ATP-dependent protein degradation. The chain is ATP-dependent Clp protease adapter protein ClpS from Methylococcus capsulatus (strain ATCC 33009 / NCIMB 11132 / Bath).